Consider the following 234-residue polypeptide: MAKKGKKIVAAQQKVDADRKYDISEGIDTALQARFAGFDESVDIAVRLGVDPRHADQMVRGSVVLPHGTGKEIKILVFAKGEKEKEALDAGADFVGNDELIEDIKNGWFGFDKAVATPDMMGAVGKIGKLLGPRGLMPNAKTGTVTFDVARAVNDLKAGKIDFRVDKAGIVHAPLGKASFGTEKLQDNMLALLRMLVAMKPATSKGAYMRSLAVSTSMGAGVRLDPLLVKDAVK.

This sequence belongs to the universal ribosomal protein uL1 family. Part of the 50S ribosomal subunit.

Binds directly to 23S rRNA. The L1 stalk is quite mobile in the ribosome, and is involved in E site tRNA release. Functionally, protein L1 is also a translational repressor protein, it controls the translation of the L11 operon by binding to its mRNA. The sequence is that of Large ribosomal subunit protein uL1 from Desulfosudis oleivorans (strain DSM 6200 / JCM 39069 / Hxd3) (Desulfococcus oleovorans).